Reading from the N-terminus, the 130-residue chain is Small ribosomal subunit protein uS11 (130 aa).

A disordered region spans residues 108–130; the sequence is IEDVTPIPHDGTGRPGGKRGRRV.

The protein belongs to the universal ribosomal protein uS11 family. Part of the 30S ribosomal subunit.

In terms of biological role, located on the platform of the 30S subunit. The polypeptide is Small ribosomal subunit protein uS11 (Methanothermobacter thermautotrophicus (strain ATCC 29096 / DSM 1053 / JCM 10044 / NBRC 100330 / Delta H) (Methanobacterium thermoautotrophicum)).